Here is a 406-residue protein sequence, read N- to C-terminus: Probable tRNA sulfurtransferase (406 aa).

Positions 60–166 (EPVMERLKQV…LNGIYLTSAK (107 aa)) constitute a THUMP domain. Residues 184–185 (ML), 209–210 (HF), R266, G288, and Q297 contribute to the ATP site.

This sequence belongs to the ThiI family.

It is found in the cytoplasm. It carries out the reaction [ThiI sulfur-carrier protein]-S-sulfanyl-L-cysteine + a uridine in tRNA + 2 reduced [2Fe-2S]-[ferredoxin] + ATP + H(+) = [ThiI sulfur-carrier protein]-L-cysteine + a 4-thiouridine in tRNA + 2 oxidized [2Fe-2S]-[ferredoxin] + AMP + diphosphate. It catalyses the reaction [ThiS sulfur-carrier protein]-C-terminal Gly-Gly-AMP + S-sulfanyl-L-cysteinyl-[cysteine desulfurase] + AH2 = [ThiS sulfur-carrier protein]-C-terminal-Gly-aminoethanethioate + L-cysteinyl-[cysteine desulfurase] + A + AMP + 2 H(+). It functions in the pathway cofactor biosynthesis; thiamine diphosphate biosynthesis. Catalyzes the ATP-dependent transfer of a sulfur to tRNA to produce 4-thiouridine in position 8 of tRNAs, which functions as a near-UV photosensor. Also catalyzes the transfer of sulfur to the sulfur carrier protein ThiS, forming ThiS-thiocarboxylate. This is a step in the synthesis of thiazole, in the thiamine biosynthesis pathway. The sulfur is donated as persulfide by IscS. This chain is Probable tRNA sulfurtransferase, found in Limosilactobacillus fermentum (strain NBRC 3956 / LMG 18251) (Lactobacillus fermentum).